The sequence spans 322 residues: GTP 3',8-cyclase (322 aa).

The Radical SAM core domain occupies 4–229; it reads NFNRNIDYLR…IPVQMKKSGP (226 aa). Arg-13 contributes to the GTP binding site. Residues Cys-20 and Cys-24 each coordinate [4Fe-4S] cluster. Position 26 (Tyr-26) interacts with S-adenosyl-L-methionine. Cys-27 contributes to the [4Fe-4S] cluster binding site. Residue Arg-64 coordinates GTP. Gly-68 contributes to the S-adenosyl-L-methionine binding site. Residue Thr-95 participates in GTP binding. An S-adenosyl-L-methionine-binding site is contributed by Ser-119. Lys-156 contacts GTP. Met-190 serves as a coordination point for S-adenosyl-L-methionine. Positions 253 and 256 each coordinate [4Fe-4S] cluster. 258-260 is a binding site for GTP; the sequence is RLR. Cys-270 provides a ligand contact to [4Fe-4S] cluster.

It belongs to the radical SAM superfamily. MoaA family. In terms of assembly, monomer and homodimer. [4Fe-4S] cluster serves as cofactor.

It catalyses the reaction GTP + AH2 + S-adenosyl-L-methionine = (8S)-3',8-cyclo-7,8-dihydroguanosine 5'-triphosphate + 5'-deoxyadenosine + L-methionine + A + H(+). It functions in the pathway cofactor biosynthesis; molybdopterin biosynthesis. Catalyzes the cyclization of GTP to (8S)-3',8-cyclo-7,8-dihydroguanosine 5'-triphosphate. The chain is GTP 3',8-cyclase from Thermodesulfovibrio yellowstonii (strain ATCC 51303 / DSM 11347 / YP87).